The primary structure comprises 163 residues: Glutathione peroxidase 2 (163 aa).

Cys36 is an active-site residue.

It belongs to the glutathione peroxidase family.

It localises to the cytoplasm. The catalysed reaction is 2 glutathione + H2O2 = glutathione disulfide + 2 H2O. Its function is as follows. May constitute a glutathione peroxidase-like protective system against oxidative stresses. The chain is Glutathione peroxidase 2 (gpx-2) from Caenorhabditis elegans.